The primary structure comprises 442 residues: Exodeoxyribonuclease 7 large subunit (442 aa).

Residues 1 to 38 (MSDSTQFSLFDSGDDEPAKVTAPKRKVARKKRSSSSSD) are disordered. Positions 22 to 33 (APKRKVARKKRS) are enriched in basic residues.

Belongs to the XseA family. Heterooligomer composed of large and small subunits.

It is found in the cytoplasm. The enzyme catalyses Exonucleolytic cleavage in either 5'- to 3'- or 3'- to 5'-direction to yield nucleoside 5'-phosphates.. Functionally, bidirectionally degrades single-stranded DNA into large acid-insoluble oligonucleotides, which are then degraded further into small acid-soluble oligonucleotides. The protein is Exodeoxyribonuclease 7 large subunit of Rhodopirellula baltica (strain DSM 10527 / NCIMB 13988 / SH1).